The sequence spans 162 residues: Large ribosomal subunit protein uL11 (162 aa).

The tract at residues 1-27 is disordered; sequence MAGTIEVLVPGGEANPGPPLGPELGPT.

The protein belongs to the universal ribosomal protein uL11 family. In terms of assembly, part of the 50S ribosomal subunit. Forms part of the ribosomal stalk which helps the ribosome interact with GTP-bound translation factors. Forms a heptameric L10(L12)2(L12)2(L12)2 complex, where L10 forms an elongated spine to which 3 L12 dimers bind in a sequential fashion.

Forms part of the ribosomal stalk which helps the ribosome interact with GTP-bound translation factors. The sequence is that of Large ribosomal subunit protein uL11 from Haloarcula marismortui (strain ATCC 43049 / DSM 3752 / JCM 8966 / VKM B-1809) (Halobacterium marismortui).